Reading from the N-terminus, the 384-residue chain is Secreted effector protein EspF(U) (384 aa).

6 repeat units span residues 96–142 (IXPA…AEHG), 143–189 (IQPA…AEHG), 190–236 (IQPA…AEHG), 237–283 (IZPA…AEHG), 284–330 (IQPA…AEHG), and 331–377 (IQPA…AEHG). The tract at residues 96 to 377 (IXPARSMAEH…RLMQHLAEHG (282 aa)) is 6 X 48 AA approximate tandem repeats. The segment at 247 to 266 (IPPAPNWPAPPPPVQNEQSR) is disordered. Pro residues predominate over residues 248–260 (PPAPNWPAPPPPV).

The protein belongs to the EspF(U)/TccP family. As to quaternary structure, interacts with host BAIAP2 and host WASL/N-WASP. Can also interact with host proteins BAIAP2L1 and WAS/WASP.

The protein localises to the secreted. It localises to the host cytoplasm. Functionally, required for efficient pedestal formation in host epithelial cells during infection. Acts as an intermediate between Tir (via host BAIAP2) and host WASL/N-WASP. Directly binds and activates WASL/N-WASP, which stimulates actin polymerization and leads to the formation of actin pedestals at the sites of bacterial adhesion. The sequence is that of Secreted effector protein EspF(U) (espF(U)) from Escherichia coli O157:H7.